A 504-amino-acid polypeptide reads, in one-letter code: Maturase K (504 aa).

The protein belongs to the intron maturase 2 family. MatK subfamily.

The protein localises to the plastid. The protein resides in the chloroplast. In terms of biological role, usually encoded in the trnK tRNA gene intron. Probably assists in splicing its own and other chloroplast group II introns. The polypeptide is Maturase K (Eichhornia crassipes (Water hyacinth)).